A 293-amino-acid chain; its full sequence is 4-hydroxy-tetrahydrodipicolinate synthase (293 aa).

Residue threonine 46 coordinates pyruvate. The active-site Proton donor/acceptor is tyrosine 134. The Schiff-base intermediate with substrate role is filled by lysine 162. Isoleucine 204 serves as a coordination point for pyruvate.

The protein belongs to the DapA family. As to quaternary structure, homotetramer; dimer of dimers.

Its subcellular location is the cytoplasm. It catalyses the reaction L-aspartate 4-semialdehyde + pyruvate = (2S,4S)-4-hydroxy-2,3,4,5-tetrahydrodipicolinate + H2O + H(+). It functions in the pathway amino-acid biosynthesis; L-lysine biosynthesis via DAP pathway; (S)-tetrahydrodipicolinate from L-aspartate: step 3/4. Catalyzes the condensation of (S)-aspartate-beta-semialdehyde [(S)-ASA] and pyruvate to 4-hydroxy-tetrahydrodipicolinate (HTPA). The chain is 4-hydroxy-tetrahydrodipicolinate synthase from Bdellovibrio bacteriovorus (strain ATCC 15356 / DSM 50701 / NCIMB 9529 / HD100).